The following is a 272-amino-acid chain: Shikimate dehydrogenase (NADP(+)) (272 aa).

Residues 14–16 (SKS) and T61 contribute to the shikimate site. The Proton acceptor role is filled by K65. E77 provides a ligand contact to NADP(+). Shikimate-binding residues include N86 and D102. NADP(+)-binding positions include 126–130 (GAGGA), 149–154 (NRTVSR), and M213. Shikimate is bound at residue Y215. G237 contributes to the NADP(+) binding site.

Belongs to the shikimate dehydrogenase family. In terms of assembly, homodimer.

The catalysed reaction is shikimate + NADP(+) = 3-dehydroshikimate + NADPH + H(+). The protein operates within metabolic intermediate biosynthesis; chorismate biosynthesis; chorismate from D-erythrose 4-phosphate and phosphoenolpyruvate: step 4/7. Involved in the biosynthesis of the chorismate, which leads to the biosynthesis of aromatic amino acids. Catalyzes the reversible NADPH linked reduction of 3-dehydroshikimate (DHSA) to yield shikimate (SA). The protein is Shikimate dehydrogenase (NADP(+)) of Escherichia coli (strain SMS-3-5 / SECEC).